Here is a 404-residue protein sequence, read N- to C-terminus: Serine/threonine transporter SstT (404 aa).

A run of 8 helical transmembrane segments spans residues 17–37 (IGIGVVIGVMLGILAPDLTGF), 39–59 (ILGKLFVGGLKAIAPLLVFAL), 75–95 (MTLIIVLYLFGTFASALVAVL), 138–158 (ALATANYIGVLSWAIIFGLAL), 179–199 (IVVWIINLAPIGIMSLVFTTI), 212–232 (FLILVLVGTMVFVALVVNPLI), 287–307 (IPLGATINMGGAAITINVLTL), and 313–333 (FGIPIDFLTALLLSVVAAVSA).

It belongs to the dicarboxylate/amino acid:cation symporter (DAACS) (TC 2.A.23) family.

The protein resides in the cell membrane. It carries out the reaction L-serine(in) + Na(+)(in) = L-serine(out) + Na(+)(out). It catalyses the reaction L-threonine(in) + Na(+)(in) = L-threonine(out) + Na(+)(out). Functionally, involved in the import of serine and threonine into the cell, with the concomitant import of sodium (symport system). This Streptococcus pyogenes serotype M12 (strain MGAS2096) protein is Serine/threonine transporter SstT.